The chain runs to 131 residues: Small ribosomal subunit protein uS8 (131 aa).

Belongs to the universal ribosomal protein uS8 family. As to quaternary structure, part of the 30S ribosomal subunit. Contacts proteins S5 and S12.

Its function is as follows. One of the primary rRNA binding proteins, it binds directly to 16S rRNA central domain where it helps coordinate assembly of the platform of the 30S subunit. This is Small ribosomal subunit protein uS8 from Laribacter hongkongensis (strain HLHK9).